The sequence spans 8384 residues: Mucin-19 (8384 aa).

The signal sequence occupies residues 1–21 (MKLILWYLVVALWCFFKDVEA). Disordered stretches follow at residues 33–197 (AASR…YGAG), 222–247 (SKAD…PDAG), 279–305 (GDTG…IDLG), and 332–467 (QEGF…PEAT). 2 stretches are compositionally biased toward low complexity: residues 35–48 (SRSG…SSSG) and 88–98 (GGFFNSSSSSG). Residues 169 to 184 (DKSRERWDAGNSRSED) show a composition bias toward basic and acidic residues. Residues 187–197 (ADSTNTRYGAG) show a composition bias toward polar residues. Over residues 279 to 299 (GDTGISSKTVEGNQTSSSGGS) the composition is skewed to polar residues. The segment covering 359–369 (GSDSSSSGDSS) has biased composition (low complexity). A compositionally biased stretch (polar residues) spans 370 to 381 (ARNGFENSSGIS). Low complexity-rich tracts occupy residues 424–435 (SDSGGNTWSSDS) and 443–452 (TSSSEYSTSG). 3 consecutive VWFD domains span residues 478–649 (GEIS…QHCN), 815–995 (GRCK…SSCI), and 1274–1447 (TICH…QECS). 8 cysteine pairs are disulfide-bonded: C502/C648, C817/C952, C838/C994, C857/C865, C1276/C1411, C1298/C1446, C1307/C1408, and C1323/C1330. Disordered regions lie at residues 1680–1699 (TSSS…PFTT), 1732–2464 (AGTT…KSPG), 2484–2526 (LESE…TEGS), 2540–2827 (RPLD…MTGT), 2850–2917 (STVG…LGTI), 2984–3027 (VTTG…SGTT), 3075–3368 (GTTG…GKTG), 3386–3428 (TTRL…GKTG), 3585–3628 (ETTG…TNGL), 3667–3736 (GSSA…TGLP), 4105–4147 (TGSS…NGLS), 4187–4251 (SAGV…AEVT), 4315–4390 (GLSA…SARV), 4414–4455 (TGSS…TNGQ), 4510–4583 (TGTT…TGLP), 4790–4843 (TGTT…TGLP), 4895–4930 (SSAG…AGVT), 5130–5161 (TGTT…GVTG), 5429–5452 (VTGT…VTGK), 5464–5494 (GPSA…GTTG), 5880–5918 (GTSI…SAEM), 6069–6403 (TGKT…STES), 6440–6918 (GRAT…ETTK), 6953–7223 (GTSE…TGFK), 7250–7749 (SFST…SKTG), 7783–7975 (KNGS…EAGS), and 8020–8133 (SGRS…VSQP). 3 stretches are compositionally biased toward low complexity: residues 1732-1746 (AGTT…TGAA), 1772-1813 (PGEA…TTGP), and 1820-1833 (GATS…EGMS). Positions 1835 to 1860 (VTGQSLGSTAGSDSEITAKTSFTGSS) are enriched in polar residues. Residues 1868–1879 (PSPGSPGHFSGG) show a composition bias toward low complexity. Residues 1880–1905 (TTEWGNVATTGAAGENTSGALGSTEG) show a composition bias toward polar residues. The span at 1909–1921 (ATTSAGSGNTAGT) shows a compositional bias: low complexity. Polar residues predominate over residues 1950–1968 (GSSTPGEADIGNTSFGKSG). Composition is skewed to low complexity over residues 1969–1983 (TPTV…SPVS) and 2013–2049 (GGKI…SGPS). Residues 2055–2100 (NYGQSSEIPGTIKSSSDVSGTMGQSDTTSGPSVAVTRTSEQSSGVT) are compositionally biased toward polar residues. Composition is skewed to low complexity over residues 2132-2147 (TTGS…GPSS) and 2159-2170 (GSGTSGQSVTGS). 2 stretches are compositionally biased toward polar residues: residues 2171-2186 (RATG…TVSF) and 2209-2225 (GSGT…TTRL). 2 stretches are compositionally biased toward low complexity: residues 2233–2246 (TESS…TTPS) and 2280–2313 (SGPS…TKPS). Residues 2238 to 6086 (GVTGTTTPSA…GVTGTTGLSA (3849 aa)) are approximate repeats of G-V-T-G-T-T-G-P-S-A. 2 stretches are compositionally biased toward polar residues: residues 2316–2332 (RTGT…TTEP) and 2354–2372 (ATES…TTIP). A compositionally biased stretch (gly residues) spans 2403–2419 (SSGGSGATRSSGGGMGT). Over residues 2420-2441 (TGQSTARSETTGPLFGLTGTFG) the composition is skewed to low complexity. The segment covering 2442–2460 (QSATVTGTSSNSAGVTTPE) has biased composition (polar residues). 3 stretches are compositionally biased toward low complexity: residues 2512–2526 (SAGE…TEGS), 2545–2571 (GSGT…TTRK), and 2578–2589 (TTGLSGLTGTSG). Composition is skewed to polar residues over residues 2595–2610 (TGTS…TSEK) and 2638–2653 (TRPS…QSAR). A compositionally biased stretch (low complexity) spans 2654–2681 (VTETVGASAGVTGTTGPSTEGSGATGPS). 2 stretches are compositionally biased toward polar residues: residues 2695–2748 (SGTT…TGTT) and 2755–2770 (TETT…TTGP). Residues 2787–2799 (ATRSSGGETETTG) are compositionally biased toward low complexity. Composition is skewed to polar residues over residues 2800 to 2827 (QSAV…MTGT), 2850 to 2859 (STVGLETTRP), and 2874 to 2892 (AQTT…QSAR). The segment covering 2894-2910 (TGASGPSVGVTGTTGPA) has biased composition (low complexity). A compositionally biased stretch (polar residues) spans 2984-2998 (VTTGPSVTGVETTAK). Positions 2999–3027 (TTSGGLSTTISSVGGTGTTGQSPERSGTT) are enriched in low complexity. Residues 3099 to 3109 (PSITGSGTTRP) show a composition bias toward polar residues. Over residues 3114–3130 (SWTAGTSSGGHSTTSPS) the composition is skewed to low complexity. Polar residues predominate over residues 3131–3159 (VRGTETTGQSAAESVTTGPVTGYTETSGP). The span at 3172-3188 (TVTQTTGSSAAVSGTTV) shows a compositional bias: low complexity. The span at 3189-3224 (QSLTVSGTTRPSSGQTEITGSSVKESGTTESSAVRS) shows a compositional bias: polar residues. Residues 3225–3277 (GTTGPTAGVTGTNGPSSAGVTGITGSSPGVTGTTGSSPGVTGTTGSSARSGTS) are compositionally biased toward low complexity. Polar residues-rich tracts occupy residues 3303–3317 (ITGT…TGTT) and 3324–3362 (TGTT…SSAG). Over residues 3390–3417 (SAGVTGTTGPSPGVTGTTGTPAGVTGTT) the composition is skewed to low complexity. Composition is skewed to polar residues over residues 3702 to 3728 (VTGT…TTGP) and 4105 to 4116 (TGSSARSGTSIP). The segment covering 4117–4126 (SVGETGTTRT) has biased composition (low complexity). Over residues 4320-4346 (VTGTTRPSAGVTGTTGQSAEVTGTTEP) the composition is skewed to polar residues. Composition is skewed to low complexity over residues 4347–4385 (SAGL…GTTG) and 4414–4426 (TGSS…STPS). Composition is skewed to low complexity over residues 5469-5494 (VTGT…GTTG) and 5889-5903 (TGTT…TTTG). Composition is skewed to polar residues over residues 5908–5918 (ITGTNGLSAEM), 6071–6103 (KTRS…TTKT), and 6111–6121 (TRPSAGITATT). Over residues 6156–6168 (TTTGTTGVTTGTT) the composition is skewed to low complexity. Composition is skewed to polar residues over residues 6217–6248 (EVST…TATT) and 6257–6275 (APGS…SAST). Low complexity predominate over residues 6284–6295 (TGSTRGVRTTGS). Polar residues-rich tracts occupy residues 6303 to 6323 (GEFS…TTLT) and 6336 to 6346 (ESTTSLPQSAK). The span at 6378–6389 (SGTTISSGGSHT) shows a compositional bias: low complexity. Composition is skewed to polar residues over residues 6440–6457 (GRAT…TSQA) and 6470–6503 (TTIT…TTYI). Low complexity predominate over residues 6507-6523 (GTTRGGLATATTGAFSG). Polar residues predominate over residues 6560 to 6571 (TTFTSGGSHTEA). Residues 6581–6597 (TGTESRAATTRAAPGTT) are compositionally biased toward low complexity. Polar residues predominate over residues 6599 to 6608 (VPGSSNTGAT). Low complexity predominate over residues 6612–6628 (GGSATTRGRITTATTGA). Composition is skewed to polar residues over residues 6669 to 6680 (RITSGGSYTATT) and 6689 to 6698 (APGSSNTGAT). Residues 6707-6718 (TRGRITTATTGA) are compositionally biased toward low complexity. Polar residues predominate over residues 6752–6766 (TTLTGDRSSTGSESR). A compositionally biased stretch (low complexity) spans 6767–6781 (TATTGVAPGTTVAPG). Polar residues predominate over residues 6794–6817 (SGTTNIGRATGATTSIVGSDTSQA). Residues 6827–6842 (SPGASSTSQSSRPGTS) show a composition bias toward low complexity. The span at 6843 to 6875 (VTPDSSASESETVTTKEFSGTTAISRTSHTGTP) shows a compositional bias: polar residues. Positions 6887-6901 (TATTGVAPGTTVAPG) are enriched in low complexity. 2 stretches are compositionally biased toward polar residues: residues 6902–6911 (SSNTEATTSV) and 6953–6964 (GTSEVAPSTTVA). Positions 6966–6994 (GSFSTAATTSPGASGTTGVTTTTKTTTSL) are enriched in low complexity. A compositionally biased stretch (polar residues) spans 7006-7041 (SATTGAPGSRTGTAGVPSATTVSPGSSNSEATTSVG). The segment covering 7045-7074 (KTGAETITEATTSTEGTGTSGTGFKTGTSE) has biased composition (low complexity). The segment covering 7085–7094 (SFSTAATTSP) has biased composition (polar residues). The span at 7095–7112 (GASGMTGVTTTTKTTTSL) shows a compositional bias: low complexity. A compositionally biased stretch (polar residues) spans 7143–7158 (TRVTPGSSNSEATTSV). Low complexity-rich tracts occupy residues 7201 to 7215 (SGSS…TEGT) and 7250 to 7276 (SFST…TTSL). Residues 7293-7311 (SGTTVAPGSSNSEATTSVG) are compositionally biased toward polar residues. Residues 7379-7397 (TTSTKGTGTSGTGFKTGTS) show a composition bias toward low complexity. Residues 7403–7421 (TTVSPGSFSTATISPGASR) show a composition bias toward polar residues. The segment covering 7422 to 7435 (TTGAAPAAETTTSL) has biased composition (low complexity). Over residues 7465–7483 (SATTIAPGSSNSEATTSLG) the composition is skewed to polar residues. The span at 7525 to 7537 (PLGGASGTSGGYV) shows a compositional bias: gly residues. Composition is skewed to polar residues over residues 7544 to 7557 (PTTS…SRTI) and 7571 to 7596 (AGTS…TSPG). Positions 7600–7613 (MTGVRTTSKTTTSL) are enriched in low complexity. 2 stretches are compositionally biased toward polar residues: residues 7642-7669 (SSRT…SGTG) and 7698-7708 (SFSTAATTSPG). Over residues 7715–7732 (TGPTAETTTFLGGSSTTG) the composition is skewed to low complexity. The span at 7783 to 7811 (KNGSMTTALGSQLSSSQTVIPGSSGTISH) shows a compositional bias: polar residues. The span at 7812 to 7828 (TTVAPGSSVTGTTTGAS) shows a compositional bias: low complexity. Polar residues predominate over residues 7830 to 7851 (DQVTGSKTGTTGVALSTTVAPG). Low complexity predominate over residues 7852–7861 (SSSTEATTST). A compositionally biased stretch (polar residues) spans 7862–7891 (GVHRTTVVGQKTGATTRGSAKQGTRSTIEA). Residues 7892-7917 (TTSFRGTGTTGSGMNTGTTGVVSGNT) are compositionally biased toward low complexity. The segment covering 7918–7934 (ISPSSFNTEATSGTSER) has biased composition (polar residues). Residues 7938 to 7952 (GSEIGTTGIVSGTTV) show a composition bias toward low complexity. 4 stretches are compositionally biased toward polar residues: residues 7953–7965 (APGS…TTSL), 8020–8040 (SGRS…SGTT), 8048–8081 (TGNT…SISG), and 8110–8120 (ETGVQTGSTLV). In terms of domain architecture, VWFC spans 8159–8225 (PVCHGPLGEE…DTCCEIGYCE (67 aa)). Intrachain disulfides connect C8288–C8339, C8306–C8353, C8315–C8369, and C8319–C8371. Residues 8288–8376 (CKNNCRSSLV…TTCSCLDICQ (89 aa)) form the CTCK domain.

As to expression, expressed corneal epithelial cells, conjunctival goblet and epithelial cells and lacrimal gland cells (at protein level). Expressed by mucous cells of the submandibular gland and submucosal gland of the trachea. Expressed by middle ear epithelial cells.

Its subcellular location is the secreted. Its function is as follows. May function in ocular mucus homeostasis. The chain is Mucin-19 (MUC19) from Homo sapiens (Human).